Consider the following 161-residue polypeptide: Cyclic pyranopterin monophosphate synthase (161 aa).

Residues 75 to 77 and 113 to 114 contribute to the substrate site; these read LCH and ME. Residue aspartate 128 is part of the active site.

It belongs to the MoaC family. Homohexamer; trimer of dimers.

The catalysed reaction is (8S)-3',8-cyclo-7,8-dihydroguanosine 5'-triphosphate = cyclic pyranopterin phosphate + diphosphate. Its pathway is cofactor biosynthesis; molybdopterin biosynthesis. Catalyzes the conversion of (8S)-3',8-cyclo-7,8-dihydroguanosine 5'-triphosphate to cyclic pyranopterin monophosphate (cPMP). In Erwinia tasmaniensis (strain DSM 17950 / CFBP 7177 / CIP 109463 / NCPPB 4357 / Et1/99), this protein is Cyclic pyranopterin monophosphate synthase.